The sequence spans 366 residues: Protein lifeguard 1 (366 aa).

Positions 1–141 (MSHEKSFLVS…GPPSYYDNQD (141 aa)) are disordered. Pro residues-rich tracts occupy residues 14–44 (YPPP…PFQP) and 67–109 (GPYP…PNPY). A run of 7 helical transmembrane segments spans residues 160–180 (VFLV…VFTF), 192–212 (VWTY…LSCC), 223–243 (LVAL…IASF), 248–268 (AVIM…IFSM), 278–298 (VGVL…CIFI), 302–322 (VLEI…LAVD), and 341–361 (FAAL…LTII).

This sequence belongs to the BI1 family. LFG subfamily.

The protein resides in the membrane. Functionally, potential apoptotic regulator. This chain is Protein lifeguard 1 (GRINA), found in Bos taurus (Bovine).